Consider the following 122-residue polypeptide: MIQTQSMLDVADNSGARRVMCIKVLGGSHRRYAGIGDIIKVTVKEAIPRGKVKKGQVMTAVVVRTRHGVRRADGSIIRFDGNAAVLLNNKQEPIGTRIFGPVTRELRNEKFMKIVSLAPEVL.

It belongs to the universal ribosomal protein uL14 family. As to quaternary structure, part of the 50S ribosomal subunit. Forms a cluster with proteins L3 and L19. In the 70S ribosome, L14 and L19 interact and together make contacts with the 16S rRNA in bridges B5 and B8.

In terms of biological role, binds to 23S rRNA. Forms part of two intersubunit bridges in the 70S ribosome. This Pseudomonas fluorescens (strain ATCC BAA-477 / NRRL B-23932 / Pf-5) protein is Large ribosomal subunit protein uL14.